The sequence spans 354 residues: Histidinol-phosphate aminotransferase (354 aa).

The residue at position 222 (K222) is an N6-(pyridoxal phosphate)lysine.

The protein belongs to the class-II pyridoxal-phosphate-dependent aminotransferase family. Histidinol-phosphate aminotransferase subfamily. As to quaternary structure, homodimer. Pyridoxal 5'-phosphate is required as a cofactor.

It catalyses the reaction L-histidinol phosphate + 2-oxoglutarate = 3-(imidazol-4-yl)-2-oxopropyl phosphate + L-glutamate. It functions in the pathway amino-acid biosynthesis; L-histidine biosynthesis; L-histidine from 5-phospho-alpha-D-ribose 1-diphosphate: step 7/9. The chain is Histidinol-phosphate aminotransferase from Leuconostoc citreum (strain KM20).